Consider the following 108-residue polypeptide: Cell cycle protein GpsB (108 aa).

The stretch at 32-69 (LDNVIKDYENFNAQIEALKAENEALKKAKYQARNTVSA) forms a coiled coil.

Belongs to the GpsB family. Forms polymers through the coiled coil domains. Interacts with PBP1, MreC and EzrA.

The protein resides in the cytoplasm. Its function is as follows. Divisome component that associates with the complex late in its assembly, after the Z-ring is formed, and is dependent on DivIC and PBP2B for its recruitment to the divisome. Together with EzrA, is a key component of the system that regulates PBP1 localization during cell cycle progression. Its main role could be the removal of PBP1 from the cell pole after pole maturation is completed. Also contributes to the recruitment of PBP1 to the division complex. Not essential for septum formation. In Streptococcus pyogenes serotype M49 (strain NZ131), this protein is Cell cycle protein GpsB.